Reading from the N-terminus, the 1349-residue chain is Aldehyde oxidase 2 (1349 aa).

The 2Fe-2S ferredoxin-type domain occupies 8–96 (DELVFFVNGR…GAAVTTVEGV (89 aa)). 4 residues coordinate [2Fe-2S] cluster: Cys-47, Cys-52, Cys-55, and Cys-78. Gln-117 is a binding site for Mo-molybdopterin. The [2Fe-2S] cluster site is built by Cys-118, Cys-121, Cys-153, and Cys-155. Cys-155 contacts Mo-molybdopterin. The region spanning 240–425 (FYGERVTWIS…ESVHIPHSQK (186 aa)) is the FAD-binding PCMH-type domain. FAD contacts are provided by residues 268 to 275 (LVVGNTSL), Ala-349, Ser-358, His-362, Asp-371, and Leu-415. Residues 816–817 (GF), 1098–1101 (ASVG), Gln-1213, and Leu-1278 contribute to the Mo-molybdopterin site. Glu-1280 acts as the Proton acceptor; for azaheterocycle hydroxylase activity in catalysis.

It belongs to the xanthine dehydrogenase family. Homodimer. The cofactor is [2Fe-2S] cluster. FAD is required as a cofactor. Requires Mo-molybdopterin as cofactor. As to expression, only detected at very few levels in nasal mucosa.

It is found in the cytoplasm. It carries out the reaction an aldehyde + O2 + H2O = a carboxylate + H2O2 + H(+). Oxidase with broad substrate specificity, oxidizing aromatic azaheterocycles, such as phthalazine, as well as aldehydes, such as benzaldehyde and retinal. This is Aldehyde oxidase 2 (AOX2) from Macaca fascicularis (Crab-eating macaque).